The sequence spans 111 residues: BET1-like protein (111 aa).

The Cytoplasmic segment spans residues 1–86 (MADWTRAQSS…MARSGRDNRK (86 aa)). A phosphoserine mark is found at S9 and S37. Residues 15-77 (DILDRENKRM…TGSVKRFSTM (63 aa)) form the t-SNARE coiled-coil homology domain. The chain crosses the membrane as a helical; Anchor for type IV membrane protein span at residues 87–107 (LLCGMAVVLIVAFFILSYLLS). Residues 108-111 (RTRT) lie on the Lumenal side of the membrane.

In terms of assembly, component of a SNARE complex consisting of STX5, YKT6, GOSR1 and BET1L. Interacts with STX5.

Its subcellular location is the golgi apparatus membrane. It localises to the golgi apparatus. It is found in the trans-Golgi network membrane. Vesicle SNARE required for targeting and fusion of retrograde transport vesicles with the Golgi complex. Required for the integrity of the Golgi complex. The protein is BET1-like protein of Mus musculus (Mouse).